The following is a 150-amino-acid chain: MQIILLEKVTNLGNLGDVVRVKDGFARNFLIPQRKARRATEAAIADFAVRRAELEKLAAEKLAAAEAVGTKLKDLVLEIGQKAGVDGRLFGSVTNHDIADALKAKGFTIEKSSVRMPTGPLKMVGDHPVAVAVHTDVVADITIRVVGEQA.

Belongs to the bacterial ribosomal protein bL9 family.

Its function is as follows. Binds to the 23S rRNA. In Polynucleobacter asymbioticus (strain DSM 18221 / CIP 109841 / QLW-P1DMWA-1) (Polynucleobacter necessarius subsp. asymbioticus), this protein is Large ribosomal subunit protein bL9.